The primary structure comprises 160 residues: Troponin C, skeletal muscle (160 aa).

At Thr-2 the chain carries N-acetylthreonine. EF-hand domains follow at residues 15 to 50, 51 to 86, 91 to 126, and 127 to 160; these read EMIA…LGQT, PTKE…QMKE, KSEE…SGEH, and VTEE…EGVQ. Residues Asp-28, Asp-30, Asp-34, Glu-39, Asp-64, Asp-66, Ser-68, Thr-70, Glu-75, Asp-104, Asn-106, Asp-108, Tyr-110, Glu-115, Asp-140, Asn-142, Asp-144, Arg-146, and Glu-151 each contribute to the Ca(2+) site.

This sequence belongs to the troponin C family. In terms of tissue distribution, fast skeletal muscle.

Troponin is the central regulatory protein of striated muscle contraction. Tn consists of three components: Tn-I which is the inhibitor of actomyosin ATPase, Tn-T which contains the binding site for tropomyosin and Tn-C. The binding of calcium to Tn-C abolishes the inhibitory action of Tn on actin filaments. This chain is Troponin C, skeletal muscle (Tnnc2), found in Mus musculus (Mouse).